Here is an 85-residue protein sequence, read N- to C-terminus: UPF0386 protein TM1040_0419 (85 aa).

Residues 62-85 (SKSSRPYQISEKGRRSVRAQLDNR) form a disordered region.

Belongs to the UPF0386 family.

In Ruegeria sp. (strain TM1040) (Silicibacter sp.), this protein is UPF0386 protein TM1040_0419.